The chain runs to 384 residues: Sphingosine kinase 1 (384 aa).

Positions 12–159 (PRPCRVLVLL…MNLLSLHTAS (148 aa)) constitute a DAGKc domain. Residues 22 to 24 (NPR) and 54 to 58 (TERRN) each bind ATP. 79–82 (SGDG) is a substrate binding site. The active-site Proton donor/acceptor is the Asp81. Residues Glu86 and 111–113 (GSG) each bind ATP. Short sequence motifs (nuclear export signal) lie at residues 147-155 (LSPMNLLSL) and 161-169 (LRLFSVLSL). Substrate is bound at residue Asp178. 2 residues coordinate ATP: Arg185 and Arg191. Phosphothreonine is present on Thr193. Ser225 is subject to Phosphoserine. 341–343 (DGE) contributes to the ATP binding site.

In terms of assembly, interacts with ACY1. Binds to calmodulin. Interacts with SPHKAP. Interacts with CIB1, the interaction occurs in a calcium-dependent manner. Interacts with TRAF2. Interacts with EEF1A1; the interaction enhances SPHK1 kinase activity. Requires Mg(2+) as cofactor. Widely expressed with highest levels in adult liver, kidney, heart and skeletal muscle. Expressed in brain cortex (at protein level).

The protein localises to the cytoplasm. The protein resides in the nucleus. It is found in the cell membrane. It localises to the endosome membrane. Its subcellular location is the membrane. The protein localises to the clathrin-coated pit. The protein resides in the synapse. It carries out the reaction a sphingoid base + ATP = a sphingoid 1-phosphate + ADP + H(+). The catalysed reaction is L-seryl-[protein] + acetyl-CoA = O-acetyl-L-seryl-[protein] + CoA. It catalyses the reaction sphinganine + ATP = sphinganine 1-phosphate + ADP + H(+). The enzyme catalyses sphing-4-enine + ATP = sphing-4-enine 1-phosphate + ADP + H(+). It carries out the reaction 1-O-hexadecyl-2-amino-sn-glycerol + ATP = 1-O-hexadecyl-2-desoxy-2-amino-sn-glycero-3-phosphate + ADP + H(+). Acetyltransferase activity increases in presence of the kinase substrate, sphingosine. In Purkinje cells, kinase activity on sphingosine increases in presence of VEGFA. In neurons, kinase activity increases during the first 24h in presence of Amyloid-beta protein 42 to decrease after 96h. Its function is as follows. Catalyzes the phosphorylation of sphingosine to form sphingosine 1-phosphate (SPP), a lipid mediator with both intra- and extracellular functions. Also acts on D-erythro-sphingosine and to a lesser extent sphinganine, but not other lipids, such as D,L-threo-dihydrosphingosine, N,N-dimethylsphingosine, diacylglycerol, ceramide, or phosphatidylinositol. In contrast to proapoptotic SPHK2, has a negative effect on intracellular ceramide levels, enhances cell growth and inhibits apoptosis. Involved in the regulation of inflammatory response and neuroinflammation. Via the product sphingosine 1-phosphate, stimulates TRAF2 E3 ubiquitin ligase activity, and promotes activation of NF-kappa-B in response to TNF signaling leading to IL17 secretion. In response to TNF and in parallel to NF-kappa-B activation, negatively regulates RANTES induction through p38 MAPK signaling pathway. Involved in endocytic membrane trafficking induced by sphingosine, recruited to dilate endosomes, also plays a role on later stages of endosomal maturation and membrane fusion independently of its kinase activity. In Purkinje cells, seems to be also involved in the regulation of autophagosome-lysosome fusion upon VEGFA. Has serine acetyltransferase activity on PTGS2/COX2 in an acetyl-CoA dependent manner. The acetyltransferase activity increases in presence of the kinase substrate, sphingosine. During neuroinflammation, through PTGS2 acetylation, promotes neuronal secretion of specialized preresolving mediators (SPMs), especially 15-R-lipoxin A4, which results in an increase of phagocytic microglia. This Homo sapiens (Human) protein is Sphingosine kinase 1.